The following is a 104-amino-acid chain: Small ribosomal subunit protein uS10 (104 aa).

This sequence belongs to the universal ribosomal protein uS10 family. As to quaternary structure, part of the 30S ribosomal subunit.

Functionally, involved in the binding of tRNA to the ribosomes. The protein is Small ribosomal subunit protein uS10 of Variovorax paradoxus (strain S110).